Reading from the N-terminus, the 395-residue chain is ATP phosphoribosyltransferase regulatory subunit (395 aa).

The protein belongs to the class-II aminoacyl-tRNA synthetase family. HisZ subfamily. Heteromultimer composed of HisG and HisZ subunits.

It localises to the cytoplasm. The protein operates within amino-acid biosynthesis; L-histidine biosynthesis; L-histidine from 5-phospho-alpha-D-ribose 1-diphosphate: step 1/9. Functionally, required for the first step of histidine biosynthesis. May allow the feedback regulation of ATP phosphoribosyltransferase activity by histidine. In Azotobacter vinelandii (strain DJ / ATCC BAA-1303), this protein is ATP phosphoribosyltransferase regulatory subunit.